Reading from the N-terminus, the 543-residue chain is Phosphatidylinositol/phosphatidylcholine transfer protein SFH12 (543 aa).

The 175-residue stretch at 120–294 folds into the CRAL-TRIO domain; the sequence is EIDEVLKYYP…FLGGSCTCAD (175 aa). The segment at 316–356 is disordered; it reads HNGDHKCSKGSQAENSGEKTIPEEDDSTTEPASEEEKASKE. Residues 490-526 are a coiled coil; that stretch reads DKEEMLNAAISRSNVLEQELAATKKALDDSLGRQEEL.

It belongs to the SFH family. Specifically expressed in flowers.

It localises to the golgi apparatus membrane. The protein resides in the cell membrane. Functionally, required for transport of secretory proteins from the Golgi complex. Catalyzes the transfer of phosphatidylinositol and phosphatidylcholine between membranes in vitro. This chain is Phosphatidylinositol/phosphatidylcholine transfer protein SFH12 (SFH12), found in Arabidopsis thaliana (Mouse-ear cress).